A 623-amino-acid polypeptide reads, in one-letter code: DELLA protein RHT-1 (623 aa).

The tract at residues Met1–Val27 is disordered. Gly residues predominate over residues Gly9–Gly19. The DELLA motif signature appears at Asp38–Ala42. Disordered stretches follow at residues Leu109–Asp138 and Ala159–Ser201. Positions Ala111 to Pro120 are enriched in pro residues. 2 stretches are compositionally biased toward low complexity: residues Gln121–Thr131 and Gly181–Ser201. One can recognise a GRAS domain in the interval Val225–Arg619. Residues Ile232–Arg288 are leucine repeat I (LRI). The short motif at Leu239–Glu243 is the LxCxE motif element. Residues His307–Gly372 are VHIID. Positions Val338–Asp342 match the VHIID motif. The segment at Gln386–Glu425 is leucine repeat II (LRII). Residues Ile435 to Asn540 form a PFYRE region. The interval Ala543–Arg619 is SAW.

The protein belongs to the GRAS family. DELLA subfamily. Phosphorylated. In terms of processing, ubiquitinated. Upon GA application it is ubiquitinated, leading to its subsequent degradation.

The protein localises to the nucleus. In terms of biological role, probable transcriptional regulator that acts as a repressor of the gibberellin (GA) signaling pathway. Probably acts by participating in large multiprotein complexes that repress transcription of GA-inducible genes. Upon GA application, it is degraded by the proteasome, allowing the GA signaling pathway. The sequence is that of DELLA protein RHT-1 (RHT1) from Triticum aestivum (Wheat).